The chain runs to 214 residues: Histone H1.1 (214 aa).

The tract at residues 1-43 (MSETAPVPQPASVAPEKPAATKKTRKPAKAAVPRKKPAGPSVS) is disordered. Serine 2 bears the N-acetylserine mark. Serine 2 and serine 12 each carry phosphoserine. Position 17 is an N6-acetyllysine (lysine 17). The segment covering 20–37 (ATKKTRKPAKAAVPRKKP) has biased composition (basic residues). An N6-(beta-hydroxybutyryl)lysine modification is found at lysine 36. Residues 38-111 (AGPSVSELIV…GAAGSFKLNK (74 aa)) form the H15 domain. Serine 43 is subject to Phosphoserine. An N6-(beta-hydroxybutyryl)lysine modification is found at lysine 54. Arginine 56 is subject to Citrulline. Residue lysine 66 is modified to N6-(beta-hydroxybutyryl)lysine. A Phosphoserine modification is found at serine 67. An N6-acetyllysine modification is found at lysine 77. An N6-(beta-hydroxybutyryl)lysine modification is found at lysine 87. Lysine 92 carries the post-translational modification N6-(beta-hydroxybutyryl)lysine; alternate. Lysine 92 bears the N6-acetyllysine; alternate mark. The segment at 93–214 (GTLVQTKGTG…KPKKAAPKKK (122 aa)) is disordered. Phosphoserine is present on serine 106. An N6-(beta-hydroxybutyryl)lysine modification is found at lysine 108. The segment covering 116–144 (KASTTKVTVKAKASGAAKKPKKTAGAAAK) has biased composition (low complexity). Residue lysine 121 is modified to N6-acetyllysine. Basic residues-rich tracts occupy residues 145–179 (KTVK…KKVA) and 186–214 (KAVK…PKKK). Threonine 202 bears the Phosphothreonine mark.

The protein belongs to the histone H1/H5 family. In terms of assembly, interacts with DFFB. In terms of processing, H1 histones are progressively phosphorylated during the cell cycle, becoming maximally phosphorylated during late G2 phase and M phase, and being dephosphorylated sharply thereafter. Citrullination at Arg-56 (H1R54ci) by PADI4 takes place within the DNA-binding site of H1 and results in its displacement from chromatin and global chromatin decondensation, thereby promoting pluripotency and stem cell maintenance.

It is found in the nucleus. The protein resides in the chromosome. Functionally, H1 histones bind to linker DNA between nucleosomes forming the macromolecular structure known as the chromatin fiber. H1 histones are necessary for the condensation of nucleosome chains into higher-order structured fibers. Also acts as a regulator of individual gene transcription through chromatin remodeling. This Rattus norvegicus (Rat) protein is Histone H1.1.